The sequence spans 172 residues: Peptide deformylase 1 (172 aa).

Fe cation contacts are provided by Cys-91 and His-133. Glu-134 is a catalytic residue. Residue His-137 coordinates Fe cation.

This sequence belongs to the polypeptide deformylase family. Fe(2+) is required as a cofactor.

It catalyses the reaction N-terminal N-formyl-L-methionyl-[peptide] + H2O = N-terminal L-methionyl-[peptide] + formate. In terms of biological role, removes the formyl group from the N-terminal Met of newly synthesized proteins. Requires at least a dipeptide for an efficient rate of reaction. N-terminal L-methionine is a prerequisite for activity but the enzyme has broad specificity at other positions. The sequence is that of Peptide deformylase 1 from Vibrio parahaemolyticus serotype O3:K6 (strain RIMD 2210633).